Here is a 118-residue protein sequence, read N- to C-terminus: Protein Rev (118 aa).

Phosphoserine; by host CK2 occurs at positions 5 and 8. The interval 18 to 28 (LIKFLYQSSSD) is homomultimerization. A disordered region spans residues 23–52 (YQSSSDPPPNPGGTRQARRNRRRRWRERQR). The short motif at 36-52 (TRQARRNRRRRWRERQR) is the Nuclear localization signal and RNA-binding (RRE) element. Positions 38 to 49 (QARRNRRRRWRE) are enriched in basic residues. Positions 75-86 (LQLPPLERLTLD) match the Nuclear export signal and binding to XPO1 motif. The interval 92–118 (GTSGTQGVGSPQILVESPTVLESGTKE) is disordered. Ser-94 and Ser-101 each carry phosphoserine; by host.

It belongs to the HIV-1 REV protein family. As to quaternary structure, homomultimer; when bound to the RRE. Multimeric assembly is essential for activity and may involve XPO1. Binds to human KPNB1, XPO1, TNPO1, RANBP5 and IPO7. Interacts with the viral Integrase. Interacts with human KHDRBS1. Interacts with human NAP1; this interaction decreases Rev multimerization and stimulates its activity. Interacts with human DEAD-box helicases DDX3 and DDX24; these interactions may serve for viral RNA export to the cytoplasm and packaging, respectively. Interacts with human PSIP1; this interaction may inhibit HIV-1 DNA integration by promoting dissociation of the Integrase-LEDGF/p75 complex. Asymmetrically arginine dimethylated at one site by host PRMT6. Methylation impairs the RNA-binding activity and export of viral RNA from the nucleus to the cytoplasm. Post-translationally, phosphorylated by protein kinase CK2. Presence of, and maybe binding to the N-terminus of the regulatory beta subunit of CK2 is necessary for CK2-mediated Rev's phosphorylation.

Its subcellular location is the host nucleus. It localises to the host nucleolus. The protein localises to the host cytoplasm. Functionally, escorts unspliced or incompletely spliced viral pre-mRNAs (late transcripts) out of the nucleus of infected cells. These pre-mRNAs carry a recognition sequence called Rev responsive element (RRE) located in the env gene, that is not present in fully spliced viral mRNAs (early transcripts). This function is essential since most viral proteins are translated from unspliced or partially spliced pre-mRNAs which cannot exit the nucleus by the pathway used by fully processed cellular mRNAs. Rev itself is translated from a fully spliced mRNA that readily exits the nucleus. Rev's nuclear localization signal (NLS) binds directly to KPNB1/Importin beta-1 without previous binding to KPNA1/Importin alpha-1. KPNB1 binds to the GDP bound form of RAN (Ran-GDP) and targets Rev to the nucleus. In the nucleus, the conversion from Ran-GDP to Ran-GTP dissociates Rev from KPNB1 and allows Rev's binding to the RRE in viral pre-mRNAs. Rev multimerization on the RRE via cooperative assembly exposes its nuclear export signal (NES) to the surface. Rev can then form a complex with XPO1/CRM1 and Ran-GTP, leading to nuclear export of the complex. Conversion from Ran-GTP to Ran-GDP mediates dissociation of the Rev/RRE/XPO1/RAN complex, so that Rev can return to the nucleus for a subsequent round of export. Beside KPNB1, also seems to interact with TNPO1/Transportin-1, RANBP5/IPO5 and IPO7/RANBP7 for nuclear import. The nucleoporin-like HRB/RIP is an essential cofactor that probably indirectly interacts with Rev to release HIV RNAs from the perinuclear region to the cytoplasm. This chain is Protein Rev, found in Human immunodeficiency virus type 1 group M subtype B (isolate LW123) (HIV-1).